A 55-amino-acid polypeptide reads, in one-letter code: Large ribosomal subunit protein bL33c (55 aa).

It belongs to the bacterial ribosomal protein bL33 family.

It is found in the plastid. It localises to the chloroplast. This is Large ribosomal subunit protein bL33c from Emiliania huxleyi (Coccolithophore).